The following is a 64-amino-acid chain: MRCLPVFVILLLLIASAPSVDARPKTKDDVPLASFHGNAERTLLNILRDGDNCCIDKQGCCPWG.

The first 22 residues, 1-22 (MRCLPVFVILLLLIASAPSVDA), serve as a signal peptide directing secretion. Residues 23–48 (RPKTKDDVPLASFHGNAERTLLNILR) constitute a propeptide that is removed on maturation. A Tryptophan amide modification is found at Trp-63.

The protein belongs to the conotoxin T superfamily. Contains 2 disulfide bonds that can be either 'C1-C3, C2-C4' or 'C1-C4, C2-C3', since these disulfide connectivities have been observed for conotoxins with cysteine framework V (for examples, see AC P0DQQ7 and AC P81755). Expressed by the venom duct.

The protein resides in the secreted. This chain is Conotoxin VnMRCL-04, found in Conus ventricosus (Mediterranean cone).